The sequence spans 946 residues: Probable leucine-rich repeat receptor-like protein kinase At5g49770 (946 aa).

A signal peptide spans 1–25 (MKMSSRIGLFKLLILLFFQIYSVYA). The Extracellular segment spans residues 26-561 (FTDGSDFTAL…LEDSKTVSMK (536 aa)). LRR repeat units lie at residues 67 to 91 (DNRV…ISTL), 92 to 116 (SELQ…IGNL), 118 to 140 (KLTF…IGNL), 141 to 164 (EQLT…MGRL), 166 to 191 (KLYW…SLPG), 195 to 219 (LLQT…LFSS), 221 to 244 (MTLL…LGLV), 245 to 268 (QNLT…LNNL), 269 to 293 (TNLQ…SLTS), 295 to 314 (YTLD…SWIP), 316 to 340 (LNSL…LFSP), 342 to 365 (QLQT…NYSK), 367 to 387 (LDFV…ANNP), and 389 to 407 (NVML…QLSG). 3 N-linked (GlcNAc...) asparagine glycosylation sites follow: N246, N267, and N287. Residues N354 and N362 are each glycosylated (N-linked (GlcNAc...) asparagine). Residues N415, N460, N489, and N514 are each glycosylated (N-linked (GlcNAc...) asparagine). The helical transmembrane segment at 562 to 582 (VIIGVVVGVVVLLLLLALAGI) threads the bilayer. Over 583 to 946 (YALRQKKRAQ…YTGVFPTPKP (364 aa)) the chain is Cytoplasmic. One can recognise a Protein kinase domain in the interval 634 to 908 (FSDANDVGGG…EVVQELESIL (275 aa)). Residues 640–648 (VGGGGYGQV) and K662 each bind ATP. D758 acts as the Proton acceptor in catalysis. Positions 919–946 (SATYEEASGDPYGRDSFEYTGVFPTPKP) are disordered.

It belongs to the protein kinase superfamily. Ser/Thr protein kinase family.

It is found in the membrane. The catalysed reaction is L-seryl-[protein] + ATP = O-phospho-L-seryl-[protein] + ADP + H(+). It catalyses the reaction L-threonyl-[protein] + ATP = O-phospho-L-threonyl-[protein] + ADP + H(+). The chain is Probable leucine-rich repeat receptor-like protein kinase At5g49770 from Arabidopsis thaliana (Mouse-ear cress).